We begin with the raw amino-acid sequence, 221 residues long: CASP-like protein 2U10 (221 aa).

A disordered region spans residues 1 to 22 (MDSSSKPMNGSAGGSPVGDERK). At 1–31 (MDSSSKPMNGSAGGSPVGDERKMGDHEHEFR) the chain is on the cytoplasmic side. Residues 32–52 (ISIILLRSFLLVLVIISEALM) form a helical membrane-spanning segment. Topologically, residues 53–91 (VTDRETGSVPLPFFGLPRPVFVTKTAKYELVTGLKFYVD) are extracellular. A helical membrane pass occupies residues 92-112 (ALGVVIGYTVLHLLFNIGLVA). Topologically, residues 113 to 122 (TKGTVVDCKS) are cytoplasmic. The chain crosses the membrane as a helical span at residues 123-143 (VAWISFIADSMMGYLLLSSAA). Residues 144–174 (VATEIGYLAEEGAPAVLWRKVCNAFGYFCTV) lie on the Extracellular side of the membrane. The chain crosses the membrane as a helical span at residues 175-195 (YAISVVICFIAALVSFVVVGI). The Cytoplasmic segment spans residues 196 to 221 (SAYHLFRLYGIQQQAAREKEKLSAEM).

Belongs to the Casparian strip membrane proteins (CASP) family. Homodimer and heterodimers.

The protein localises to the cell membrane. The sequence is that of CASP-like protein 2U10 from Selaginella moellendorffii (Spikemoss).